We begin with the raw amino-acid sequence, 362 residues long: Ribosome-binding ATPase YchF (362 aa).

The OBG-type G domain maps to 2 to 258 (LSAGIVGLPN…LDANGRQDWL (257 aa)). An ATP-binding site is contributed by 11–16 (NVGKST). Mg(2+) contacts are provided by Ser-15 and Thr-35. The TGS domain maps to 281–347 (GLWSFFTFGK…EAKKQGLVRL (67 aa)).

This sequence belongs to the TRAFAC class OBG-HflX-like GTPase superfamily. OBG GTPase family. YchF/OLA1 subfamily. Mg(2+) serves as cofactor.

Its function is as follows. ATPase that binds to both the 70S ribosome and the 50S ribosomal subunit in a nucleotide-independent manner. In Mycoplasma pneumoniae (strain ATCC 29342 / M129 / Subtype 1) (Mycoplasmoides pneumoniae), this protein is Ribosome-binding ATPase YchF.